Here is a 283-residue protein sequence, read N- to C-terminus: Acetyl-coenzyme A carboxylase carboxyl transferase subunit beta (283 aa).

Residues 27 to 283 enclose the CoA carboxyltransferase N-terminal domain; that stretch reads VWVKCERCGE…LLDLHLRGEK (257 aa). The Zn(2+) site is built by Cys-31, Cys-34, Cys-50, and Cys-53. Residues 31–53 form a C4-type zinc finger; that stretch reads CERCGEILFKKELDKNYKVCLKC.

It belongs to the AccD/PCCB family. Acetyl-CoA carboxylase is a heterohexamer composed of biotin carboxyl carrier protein (AccB), biotin carboxylase (AccC) and two subunits each of ACCase subunit alpha (AccA) and ACCase subunit beta (AccD). The cofactor is Zn(2+).

It is found in the cytoplasm. The catalysed reaction is N(6)-carboxybiotinyl-L-lysyl-[protein] + acetyl-CoA = N(6)-biotinyl-L-lysyl-[protein] + malonyl-CoA. It participates in lipid metabolism; malonyl-CoA biosynthesis; malonyl-CoA from acetyl-CoA: step 1/1. In terms of biological role, component of the acetyl coenzyme A carboxylase (ACC) complex. Biotin carboxylase (BC) catalyzes the carboxylation of biotin on its carrier protein (BCCP) and then the CO(2) group is transferred by the transcarboxylase to acetyl-CoA to form malonyl-CoA. The sequence is that of Acetyl-coenzyme A carboxylase carboxyl transferase subunit beta from Pelotomaculum thermopropionicum (strain DSM 13744 / JCM 10971 / SI).